Consider the following 232-residue polypeptide: Phosphatidylserine decarboxylase proenzyme (232 aa).

Ser-190 (schiff-base intermediate with substrate; via pyruvic acid) is an active-site residue. Position 190 is a pyruvic acid (Ser); by autocatalysis (Ser-190).

It belongs to the phosphatidylserine decarboxylase family. PSD-A subfamily. As to quaternary structure, heterodimer of a large membrane-associated beta subunit and a small pyruvoyl-containing alpha subunit. Pyruvate is required as a cofactor. Post-translationally, is synthesized initially as an inactive proenzyme. Formation of the active enzyme involves a self-maturation process in which the active site pyruvoyl group is generated from an internal serine residue via an autocatalytic post-translational modification. Two non-identical subunits are generated from the proenzyme in this reaction, and the pyruvate is formed at the N-terminus of the alpha chain, which is derived from the carboxyl end of the proenzyme. The post-translation cleavage follows an unusual pathway, termed non-hydrolytic serinolysis, in which the side chain hydroxyl group of the serine supplies its oxygen atom to form the C-terminus of the beta chain, while the remainder of the serine residue undergoes an oxidative deamination to produce ammonia and the pyruvoyl prosthetic group on the alpha chain.

Its subcellular location is the cell membrane. It carries out the reaction a 1,2-diacyl-sn-glycero-3-phospho-L-serine + H(+) = a 1,2-diacyl-sn-glycero-3-phosphoethanolamine + CO2. The protein operates within phospholipid metabolism; phosphatidylethanolamine biosynthesis; phosphatidylethanolamine from CDP-diacylglycerol: step 2/2. In terms of biological role, catalyzes the formation of phosphatidylethanolamine (PtdEtn) from phosphatidylserine (PtdSer). This Rhizobium rhizogenes (strain K84 / ATCC BAA-868) (Agrobacterium radiobacter) protein is Phosphatidylserine decarboxylase proenzyme.